A 1020-amino-acid polypeptide reads, in one-letter code: Probable beta-galactosidase B (1020 aa).

The first 22 residues, 1 to 22 (MLISKTVLSGLALGASFVGVSA), serve as a signal peptide directing secretion. Residue N25 is glycosylated (N-linked (GlcNAc...) asparagine). A substrate-binding site is contributed by Y90. N-linked (GlcNAc...) asparagine glycosylation is present at N111. Substrate-binding residues include N135, A136, and E137. N-linked (GlcNAc...) asparagine glycosylation occurs at N172. A substrate-binding site is contributed by N195. Catalysis depends on E196, which acts as the Proton donor. N-linked (GlcNAc...) asparagine glycans are attached at residues N210 and N251. Position 264 (Y264) interacts with substrate. An intrachain disulfide couples C270 to C323. A glycan (N-linked (GlcNAc...) asparagine) is linked at N271. The Nucleophile role is filled by E307. A substrate-binding site is contributed by Y372. 11 N-linked (GlcNAc...) asparagine glycosylation sites follow: N410, N455, N549, N596, N625, N702, N747, N785, N819, N880, and N919.

The protein belongs to the glycosyl hydrolase 35 family.

It is found in the secreted. It carries out the reaction Hydrolysis of terminal non-reducing beta-D-galactose residues in beta-D-galactosides.. Its function is as follows. Cleaves beta-linked terminal galactosyl residues from gangliosides, glycoproteins, and glycosaminoglycans. The protein is Probable beta-galactosidase B (lacB) of Aspergillus flavus (strain ATCC 200026 / FGSC A1120 / IAM 13836 / NRRL 3357 / JCM 12722 / SRRC 167).